A 306-amino-acid polypeptide reads, in one-letter code: Putative S-adenosyl-L-methionine-dependent methyltransferase MAV_4442 (306 aa).

S-adenosyl-L-methionine is bound by residues D129 and 158-159 (DL).

It belongs to the UPF0677 family.

Its function is as follows. Exhibits S-adenosyl-L-methionine-dependent methyltransferase activity. This is Putative S-adenosyl-L-methionine-dependent methyltransferase MAV_4442 from Mycobacterium avium (strain 104).